Here is a 367-residue protein sequence, read N- to C-terminus: Glutamate 5-kinase (367 aa).

Lysine 8 serves as a coordination point for ATP. Residues serine 49, aspartate 136, and asparagine 148 each coordinate substrate. ATP is bound by residues threonine 168 to aspartate 169 and threonine 210 to lysine 216. The PUA domain occupies threonine 275–glutamate 353.

The protein belongs to the glutamate 5-kinase family.

Its subcellular location is the cytoplasm. The catalysed reaction is L-glutamate + ATP = L-glutamyl 5-phosphate + ADP. It functions in the pathway amino-acid biosynthesis; L-proline biosynthesis; L-glutamate 5-semialdehyde from L-glutamate: step 1/2. In terms of biological role, catalyzes the transfer of a phosphate group to glutamate to form L-glutamate 5-phosphate. The sequence is that of Glutamate 5-kinase from Synechococcus elongatus (strain ATCC 33912 / PCC 7942 / FACHB-805) (Anacystis nidulans R2).